The chain runs to 234 residues: Segregation and condensation protein A (234 aa).

The protein belongs to the ScpA family. In terms of assembly, component of a cohesin-like complex composed of ScpA, ScpB and the Smc homodimer, in which ScpA and ScpB bind to the head domain of Smc. The presence of the three proteins is required for the association of the complex with DNA.

The protein resides in the cytoplasm. In terms of biological role, participates in chromosomal partition during cell division. May act via the formation of a condensin-like complex containing Smc and ScpB that pull DNA away from mid-cell into both cell halves. This chain is Segregation and condensation protein A, found in Streptococcus pyogenes serotype M18 (strain MGAS8232).